The following is a 289-amino-acid chain: Diaminopimelate epimerase (289 aa).

Substrate contacts are provided by Asn13, Gln52, and Asn72. The Proton donor role is filled by Cys81. Substrate contacts are provided by residues 82–83 (GN), Asn167, Asn201, and 219–220 (ER). Cys228 functions as the Proton acceptor in the catalytic mechanism. Substrate is bound at residue 229–230 (GT).

This sequence belongs to the diaminopimelate epimerase family. Homodimer.

The protein localises to the cytoplasm. It catalyses the reaction (2S,6S)-2,6-diaminopimelate = meso-2,6-diaminopimelate. It participates in amino-acid biosynthesis; L-lysine biosynthesis via DAP pathway; DL-2,6-diaminopimelate from LL-2,6-diaminopimelate: step 1/1. In terms of biological role, catalyzes the stereoinversion of LL-2,6-diaminopimelate (L,L-DAP) to meso-diaminopimelate (meso-DAP), a precursor of L-lysine and an essential component of the bacterial peptidoglycan. The polypeptide is Diaminopimelate epimerase (Caulobacter sp. (strain K31)).